The primary structure comprises 181 residues: Peptide deformylase 2 (181 aa).

The Fe cation site is built by Cys-109 and His-151. Glu-152 is a catalytic residue. His-155 contributes to the Fe cation binding site.

It belongs to the polypeptide deformylase family. Fe(2+) is required as a cofactor.

The enzyme catalyses N-terminal N-formyl-L-methionyl-[peptide] + H2O = N-terminal L-methionyl-[peptide] + formate. Its function is as follows. Removes the formyl group from the N-terminal Met of newly synthesized proteins. Requires at least a dipeptide for an efficient rate of reaction. N-terminal L-methionine is a prerequisite for activity but the enzyme has broad specificity at other positions. In Shewanella oneidensis (strain ATCC 700550 / JCM 31522 / CIP 106686 / LMG 19005 / NCIMB 14063 / MR-1), this protein is Peptide deformylase 2.